Consider the following 239-residue polypeptide: Skn-1 dependent zygotic transcript 1 protein (239 aa).

In terms of biological role, may have a role in mesendoderm development during embryogenesis. The chain is Skn-1 dependent zygotic transcript 1 protein from Caenorhabditis briggsae.